A 425-amino-acid chain; its full sequence is Adenylosuccinate synthetase (425 aa).

GTP contacts are provided by residues glycine 12–lysine 18 and glycine 40–threonine 42. Aspartate 13 serves as the catalytic Proton acceptor. Mg(2+) contacts are provided by aspartate 13 and glycine 40. Residues aspartate 13–lysine 16, asparagine 38–histidine 41, threonine 127, arginine 141, glutamine 222, threonine 237, and arginine 301 contribute to the IMP site. The active-site Proton donor is histidine 41. A substrate-binding site is contributed by alanine 297–arginine 303. GTP-binding positions include arginine 303, lysine 329–aspartate 331, and serine 411–glycine 413.

It belongs to the adenylosuccinate synthetase family. Homodimer. Mg(2+) serves as cofactor.

It localises to the cytoplasm. The catalysed reaction is IMP + L-aspartate + GTP = N(6)-(1,2-dicarboxyethyl)-AMP + GDP + phosphate + 2 H(+). It functions in the pathway purine metabolism; AMP biosynthesis via de novo pathway; AMP from IMP: step 1/2. Plays an important role in the de novo pathway of purine nucleotide biosynthesis. Catalyzes the first committed step in the biosynthesis of AMP from IMP. In Fusobacterium nucleatum, this protein is Adenylosuccinate synthetase.